A 419-amino-acid chain; its full sequence is UDP-N-acetylglucosamine 1-carboxyvinyltransferase (419 aa).

Lys22 to Asn23 provides a ligand contact to phosphoenolpyruvate. Arg91 is a UDP-N-acetyl-alpha-D-glucosamine binding site. Cys115 serves as the catalytic Proton donor. Position 115 is a 2-(S-cysteinyl)pyruvic acid O-phosphothioketal (Cys115). Residues Arg120–Leu124, Lys160–Val163, Asp305, and Ile327 each bind UDP-N-acetyl-alpha-D-glucosamine.

Belongs to the EPSP synthase family. MurA subfamily.

The protein localises to the cytoplasm. It catalyses the reaction phosphoenolpyruvate + UDP-N-acetyl-alpha-D-glucosamine = UDP-N-acetyl-3-O-(1-carboxyvinyl)-alpha-D-glucosamine + phosphate. Its pathway is cell wall biogenesis; peptidoglycan biosynthesis. Functionally, cell wall formation. Adds enolpyruvyl to UDP-N-acetylglucosamine. This is UDP-N-acetylglucosamine 1-carboxyvinyltransferase from Tolumonas auensis (strain DSM 9187 / NBRC 110442 / TA 4).